The chain runs to 236 residues: Phosphoribosylaminoimidazole-succinocarboxamide synthase (236 aa).

This sequence belongs to the SAICAR synthetase family.

It carries out the reaction 5-amino-1-(5-phospho-D-ribosyl)imidazole-4-carboxylate + L-aspartate + ATP = (2S)-2-[5-amino-1-(5-phospho-beta-D-ribosyl)imidazole-4-carboxamido]succinate + ADP + phosphate + 2 H(+). It functions in the pathway purine metabolism; IMP biosynthesis via de novo pathway; 5-amino-1-(5-phospho-D-ribosyl)imidazole-4-carboxamide from 5-amino-1-(5-phospho-D-ribosyl)imidazole-4-carboxylate: step 1/2. In Pseudomonas putida (strain W619), this protein is Phosphoribosylaminoimidazole-succinocarboxamide synthase.